A 299-amino-acid chain; its full sequence is ATP phosphoribosyltransferase (299 aa).

Belongs to the ATP phosphoribosyltransferase family. Long subfamily. In terms of assembly, equilibrium between an active dimeric form, an inactive hexameric form and higher aggregates. Interconversion between the various forms is largely reversible and is influenced by the natural substrates and inhibitors of the enzyme. It depends on Mg(2+) as a cofactor.

It is found in the cytoplasm. It carries out the reaction 1-(5-phospho-beta-D-ribosyl)-ATP + diphosphate = 5-phospho-alpha-D-ribose 1-diphosphate + ATP. It participates in amino-acid biosynthesis; L-histidine biosynthesis; L-histidine from 5-phospho-alpha-D-ribose 1-diphosphate: step 1/9. With respect to regulation, feedback inhibited by histidine. In terms of biological role, catalyzes the condensation of ATP and 5-phosphoribose 1-diphosphate to form N'-(5'-phosphoribosyl)-ATP (PR-ATP). Has a crucial role in the pathway because the rate of histidine biosynthesis seems to be controlled primarily by regulation of HisG enzymatic activity. This Buchnera aphidicola subsp. Schlechtendalia chinensis protein is ATP phosphoribosyltransferase.